Reading from the N-terminus, the 458-residue chain is Adenylosuccinate synthetase (458 aa).

GTP is bound by residues 11-17 (GDEGKGG) and 39-41 (GHT). D12 functions as the Proton acceptor in the catalytic mechanism. Residues D12 and G39 each contribute to the Mg(2+) site. IMP is bound by residues 12 to 15 (DEGK), 37 to 40 (NAGH), T127, R141, Q232, T247, and R330. The active-site Proton donor is the H40. 326-332 (TVTGRPR) serves as a coordination point for substrate. GTP-binding positions include R332, 358–360 (HLD), and 443–445 (GVG).

This sequence belongs to the adenylosuccinate synthetase family. In terms of assembly, homodimer. Mg(2+) is required as a cofactor.

The protein localises to the cytoplasm. It carries out the reaction IMP + L-aspartate + GTP = N(6)-(1,2-dicarboxyethyl)-AMP + GDP + phosphate + 2 H(+). Its pathway is purine metabolism; AMP biosynthesis via de novo pathway; AMP from IMP: step 1/2. Functionally, plays an important role in the de novo pathway of purine nucleotide biosynthesis. Catalyzes the first committed step in the biosynthesis of AMP from IMP. In Haloarcula marismortui (strain ATCC 43049 / DSM 3752 / JCM 8966 / VKM B-1809) (Halobacterium marismortui), this protein is Adenylosuccinate synthetase.